We begin with the raw amino-acid sequence, 134 residues long: D-ribose pyranase (134 aa).

H20 functions as the Proton donor in the catalytic mechanism. Substrate is bound by residues D28, H101, and 123 to 125 (YCN).

It belongs to the RbsD / FucU family. RbsD subfamily. In terms of assembly, homodecamer.

Its subcellular location is the cytoplasm. The enzyme catalyses beta-D-ribopyranose = beta-D-ribofuranose. It functions in the pathway carbohydrate metabolism; D-ribose degradation; D-ribose 5-phosphate from beta-D-ribopyranose: step 1/2. Functionally, catalyzes the interconversion of beta-pyran and beta-furan forms of D-ribose. This chain is D-ribose pyranase, found in Pseudomonas fluorescens (strain SBW25).